The sequence spans 680 residues: Translation factor GUF1 homolog, chloroplastic (680 aa).

Residues 1-51 (MAAKINSLAALVSLQASHHHHXSTPFYFSPFSPHLSTTLTSRRRSLRSAVV) constitute a chloroplast transit peptide. Residues 83 to 264 (SNIRNFCIIA…AIVKRIPPPC (182 aa)) enclose the tr-type G domain. GTP-binding positions include 92–99 (AHIDHGKS), 157–161 (DTPGH), and 211–214 (NKID).

This sequence belongs to the TRAFAC class translation factor GTPase superfamily. Classic translation factor GTPase family. LepA subfamily.

Its subcellular location is the plastid. It is found in the chloroplast. The catalysed reaction is GTP + H2O = GDP + phosphate + H(+). Its function is as follows. Promotes chloroplast protein synthesis. May act as a fidelity factor of the translation reaction, by catalyzing a one-codon backward translocation of tRNAs on improperly translocated ribosomes. The polypeptide is Translation factor GUF1 homolog, chloroplastic (Vitis vinifera (Grape)).